Here is a 601-residue protein sequence, read N- to C-terminus: Glutamine--fructose-6-phosphate aminotransferase [isomerizing] (601 aa).

Cysteine 2 functions as the Nucleophile; for GATase activity in the catalytic mechanism. The Glutamine amidotransferase type-2 domain occupies cysteine 2 to aspartate 218. 2 consecutive SIS domains span residues isoleucine 284 to arginine 423 and isoleucine 453 to proline 591. Lysine 596 (for Fru-6P isomerization activity) is an active-site residue.

Homodimer.

The protein resides in the cytoplasm. It catalyses the reaction D-fructose 6-phosphate + L-glutamine = D-glucosamine 6-phosphate + L-glutamate. Catalyzes the first step in hexosamine metabolism, converting fructose-6P into glucosamine-6P using glutamine as a nitrogen source. The polypeptide is Glutamine--fructose-6-phosphate aminotransferase [isomerizing] (Staphylococcus aureus (strain COL)).